A 491-amino-acid chain; its full sequence is Protein nucleotidyltransferase YdiU (491 aa).

Residues Gly-92, Gly-94, Arg-95, Lys-115, Asp-127, Gly-128, Arg-178, and Arg-185 each coordinate ATP. Asp-254 acts as the Proton acceptor in catalysis. Mg(2+) contacts are provided by Asn-255 and Asp-264. Asp-264 lines the ATP pocket.

The protein belongs to the SELO family. It depends on Mg(2+) as a cofactor. The cofactor is Mn(2+).

It carries out the reaction L-seryl-[protein] + ATP = 3-O-(5'-adenylyl)-L-seryl-[protein] + diphosphate. The enzyme catalyses L-threonyl-[protein] + ATP = 3-O-(5'-adenylyl)-L-threonyl-[protein] + diphosphate. It catalyses the reaction L-tyrosyl-[protein] + ATP = O-(5'-adenylyl)-L-tyrosyl-[protein] + diphosphate. The catalysed reaction is L-histidyl-[protein] + UTP = N(tele)-(5'-uridylyl)-L-histidyl-[protein] + diphosphate. It carries out the reaction L-seryl-[protein] + UTP = O-(5'-uridylyl)-L-seryl-[protein] + diphosphate. The enzyme catalyses L-tyrosyl-[protein] + UTP = O-(5'-uridylyl)-L-tyrosyl-[protein] + diphosphate. Nucleotidyltransferase involved in the post-translational modification of proteins. It can catalyze the addition of adenosine monophosphate (AMP) or uridine monophosphate (UMP) to a protein, resulting in modifications known as AMPylation and UMPylation. The sequence is that of Protein nucleotidyltransferase YdiU from Mycolicibacterium paratuberculosis (strain ATCC BAA-968 / K-10) (Mycobacterium paratuberculosis).